A 186-amino-acid chain; its full sequence is Peptide deformylase (186 aa).

Positions 99 and 141 each coordinate Fe cation. Residue Glu-142 is part of the active site. His-145 is a binding site for Fe cation.

It belongs to the polypeptide deformylase family. The cofactor is Fe(2+).

The enzyme catalyses N-terminal N-formyl-L-methionyl-[peptide] + H2O = N-terminal L-methionyl-[peptide] + formate. Removes the formyl group from the N-terminal Met of newly synthesized proteins. Requires at least a dipeptide for an efficient rate of reaction. N-terminal L-methionine is a prerequisite for activity but the enzyme has broad specificity at other positions. The chain is Peptide deformylase from Chlamydia felis (strain Fe/C-56) (Chlamydophila felis).